Here is a 301-residue protein sequence, read N- to C-terminus: Small ribosomal subunit protein uS2 (301 aa).

This sequence belongs to the universal ribosomal protein uS2 family. In terms of assembly, component of the small ribosomal subunit. Mature ribosomes consist of a small (40S) and a large (60S) subunit. The 40S subunit contains about 33 different proteins and 1 molecule of RNA (18S). The 60S subunit contains about 49 different proteins and 3 molecules of RNA (25S, 5.8S and 5S). Interacts with RPS21.

The protein resides in the cytoplasm. Functionally, required for the assembly and/or stability of the 40S ribosomal subunit. Required for the processing of the 20S rRNA-precursor to mature 18S rRNA in a late step of the maturation of 40S ribosomal subunits. This Ajellomyces dermatitidis (strain ER-3 / ATCC MYA-2586) (Blastomyces dermatitidis) protein is Small ribosomal subunit protein uS2.